The chain runs to 329 residues: Quinone-oxidoreductase QR1, chloroplastic (329 aa).

Belongs to the zinc-containing alcohol dehydrogenase family. Quinone oxidoreductase subfamily.

The protein localises to the plastid. Its subcellular location is the chloroplast outer membrane. The catalysed reaction is 2 a quinone + NADPH + H(+) = 2 a 1,4-benzosemiquinone + NADP(+). With respect to regulation, inhibited by dicumarol. Functionally, NADPH-dependent single-electron reducing quinone reductase. Involved in haustorium initiation in parasitic plants through redox cycling of exogenous haustorium-inducing factors. Can use 9,10-phenanthrenequinone (PAQ), 1,2-naphthoquinone, 5-hydroxy-1,4-naphthoquinone (juglone) and 2,6-dimethoxy-p-benzoquinone (DMBQ) as substrates, but has no activity with menadione, diamide, 2,3-dimethoxy-5-methyl-1,4-benzoquinone or 1,4-naphthoquinone. This is Quinone-oxidoreductase QR1, chloroplastic from Triphysaria versicolor (Yellow owl's clover).